A 381-amino-acid polypeptide reads, in one-letter code: Heme A synthase (381 aa).

The disordered stretch occupies residues 1 to 23; it reads MARRPVFQEVTETTPPGTTPSGG. The segment covering 11–23 has biased composition (low complexity); the sequence is TETTPPGTTPSGG. A run of 8 helical transmembrane segments spans residues 34–54, 120–140, 151–171, 185–205, 228–248, 285–305, 319–339, and 342–362; these read GAIR…IALG, RLLG…FLAT, LLLL…MVHS, LATH…YVLA, TTGL…VAGI, LVQF…VVVF, AYVA…MNVL, and SPLP…TLIL. H290 serves as a coordination point for heme. H350 serves as a coordination point for heme.

The protein belongs to the COX15/CtaA family. Type 2 subfamily. As to quaternary structure, interacts with CtaB. Heme b serves as cofactor.

The protein localises to the cell membrane. The catalysed reaction is Fe(II)-heme o + 2 A + H2O = Fe(II)-heme a + 2 AH2. It participates in porphyrin-containing compound metabolism; heme A biosynthesis; heme A from heme O: step 1/1. Functionally, catalyzes the conversion of heme O to heme A by two successive hydroxylations of the methyl group at C8. The first hydroxylation forms heme I, the second hydroxylation results in an unstable dihydroxymethyl group, which spontaneously dehydrates, resulting in the formyl group of heme A. The sequence is that of Heme A synthase from Paracoccus denitrificans (strain Pd 1222).